The chain runs to 509 residues: MNWILYVILPAVCIILGWTIRWLYARFQLSASEQRAERILQEAIKDAEAQKKEFLLEAKEQLIREQKQQERENRERRSDLQRFERRLAQKEEVLDKRVETVEKQEKELIKREAALDERTEILSGEEERYREELERISGLTQQQAKDLIIRDLEAEAKHDAVTIINKIEQEAQLTAEKKAQDILITTIQRLATETASDITVSTVSLPSDEMKGRIIGREGRNIRALETLTGVDIIIDDTPEAVVVSCFDPVRKEIARVALERLILDGRIHPARIEEIVQKVTREISQKVYEEGEKVLFDLGIHNMNQEGVRALGRLYFRTSYGQNVLQHSKEVAIIAGMIASEIGANVEIAKRGALLHDIGKGAETDSDKNHAEIGMELAKRINEDPRVVNAVGAHHNDIEPTCIESVIVQIADAISAARPGARRETMDNYVKRLENLEQLAEGFNGVEKAYAIQAGRELRVVINNEKISDADTKILARDIAKKIENDLQYPGRIRVTLIRETRIVEYAR.

Residues 3–23 form a helical membrane-spanning segment; that stretch reads WILYVILPAVCIILGWTIRWL. Residues 199 to 284 enclose the KH domain; sequence TVSTVSLPSD…EIVQKVTREI (86 aa). The HD domain occupies 325–418; sequence VLQHSKEVAI…VQIADAISAA (94 aa).

This sequence belongs to the RNase Y family.

It localises to the cell membrane. In terms of biological role, endoribonuclease that initiates mRNA decay. The polypeptide is Ribonuclease Y (Treponema denticola (strain ATCC 35405 / DSM 14222 / CIP 103919 / JCM 8153 / KCTC 15104)).